We begin with the raw amino-acid sequence, 65 residues long: Double gene block protein 1 (65 aa).

The interval 1 to 41 is disordered; the sequence is MDSQRTVELTNPRGRSKERGDSGGKQKNSMGRKIANDAISE. Residues 15-24 show a composition bias toward basic and acidic residues; that stretch reads RSKERGDSGG. An RNA-binding region spans residues 17–43; that stretch reads KERGDSGGKQKNSMGRKIANDAISESK.

The protein belongs to the carmovirus double gene block protein 1 family. In terms of assembly, homodimer.

Its function is as follows. Cell-to-cell movement. Displays RNA-binding activity. This chain is Double gene block protein 1, found in Melon necrotic spot virus (MNSV).